Here is a 74-residue protein sequence, read N- to C-terminus: Psi-conotoxin PrIIIE (74 aa).

The signal sequence occupies residues 1–19; it reads MSKLGVLLTICLLLFPITA. The propeptide occupies 20-50; sequence LPVDGDQPADRPVERMQDNISSEQHPFFEKR. Cystine bridges form between cysteine 54/cysteine 66, cysteine 55/cysteine 71, and cysteine 61/cysteine 72. A Cysteine amide modification is found at cysteine 72.

Belongs to the conotoxin M superfamily. Expressed by the venom duct.

The protein resides in the secreted. Its function is as follows. Psi-conotoxins act on postsynaptic membranes, and act as non-competitive antagonist of nicotinic acetylcholine receptors (nAChR). Reversibly inhibits both adult- and fetal-types nAChR. The inhibition potency against the adult- (alpha-1/beta-1/epsilon/delta) is higher than against the fetal-type (alpha-1/beta-1/gamma/delta). Induces flaccid paralysis in goldfish, but does not induce any remarkable behavior in mice and does not block action potential in directly stimulated frog muscle preparations. The chain is Psi-conotoxin PrIIIE from Conus parius (Cone snail).